A 219-amino-acid polypeptide reads, in one-letter code: Elongation factor Ts (219 aa).

An involved in Mg(2+) ion dislocation from EF-Tu region spans residues 82–85; the sequence is TDFV.

Belongs to the EF-Ts family.

It is found in the cytoplasm. In terms of biological role, associates with the EF-Tu.GDP complex and induces the exchange of GDP to GTP. It remains bound to the aminoacyl-tRNA.EF-Tu.GTP complex up to the GTP hydrolysis stage on the ribosome. The sequence is that of Elongation factor Ts from Gloeobacter violaceus (strain ATCC 29082 / PCC 7421).